Here is a 246-residue protein sequence, read N- to C-terminus: Protein lin-37 homolog (246 aa).

M1 is modified (N-acetylmethionine). Residues K5 and K7 each participate in a glycyl lysine isopeptide (Lys-Gly) (interchain with G-Cter in SUMO2) cross-link. Residues 39-55 show a composition bias toward basic and acidic residues; it reads RLDEEAGKTPLDTHNKD. Disordered stretches follow at residues 39-90 and 129-208; these read RLDE…GGPQ and VRER…TLIY. Phosphoserine occurs at positions 135 and 138. T167 is subject to Phosphothreonine. S182 and S202 each carry phosphoserine.

Component of the DREAM complex (also named LINC complex) at least composed of E2F4, E2F5, LIN9, LIN37, LIN52, LIN54, MYBL1, MYBL2, RBL1, RBL2, RBBP4, TFDP1 and TFDP2. The complex exists in quiescent cells where it represses cell cycle-dependent genes. It dissociates in S phase when LIN9, LIN37, LIN52 and LIN54 form a subcomplex that binds to MYBL2.

The polypeptide is Protein lin-37 homolog (Lin37) (Mus musculus (Mouse)).